The following is an 85-amino-acid chain: MFLYRLICLFILICIITVDISTSEEISDGVEDKNNNPAIPREPSKITNGEEKTKEKSKLQVVEITEPLHACTSRDIWISGSTPCF.

The first 23 residues, 1-23 (MFLYRLICLFILICIITVDISTS), serve as a signal peptide directing secretion. Cysteine 71 and cysteine 84 are disulfide-bonded.

In terms of tissue distribution, highly expressed in the venom apparatus, and weakly expressed in residual body.

It is found in the secreted. Its function is as follows. Endoparasitoid venom toxin that exhibits insecticidal activity against Tenebrio molitor pupae. Impacts genes related to immune response, environmental information processing, metabolism, and response to external stimuli in T.molitor, suggesting its involvement in the intricate parasitoid wasp-host interaction. This is Insecticidal toxin Vn1 from Aphidius gifuensis (Parasitoid wasp).